We begin with the raw amino-acid sequence, 117 residues long: uncharacterized protein (117 aa).

Residues 1–20 (METKKLIGKPLQPARPVRHL) form a disordered region.

This is an uncharacterized protein from Homo sapiens (Human).